The following is a 429-amino-acid chain: Trigger factor (429 aa).

The region spanning 162-247 (DDTVDLAFEG…INAIKKLRQP (86 aa)) is the PPIase FKBP-type domain.

Belongs to the FKBP-type PPIase family. Tig subfamily.

Its subcellular location is the cytoplasm. It carries out the reaction [protein]-peptidylproline (omega=180) = [protein]-peptidylproline (omega=0). Functionally, involved in protein export. Acts as a chaperone by maintaining the newly synthesized protein in an open conformation. Functions as a peptidyl-prolyl cis-trans isomerase. This chain is Trigger factor, found in Fusobacterium nucleatum subsp. nucleatum (strain ATCC 25586 / DSM 15643 / BCRC 10681 / CIP 101130 / JCM 8532 / KCTC 2640 / LMG 13131 / VPI 4355).